Consider the following 67-residue polypeptide: uncharacterized protein (67 aa).

This is an uncharacterized protein from Enterobacteria phage T4 (Bacteriophage T4).